Reading from the N-terminus, the 83-residue chain is Cytochrome b559 subunit alpha (83 aa).

A helical membrane pass occupies residues 21-35 (VIHSITIPSLFIAGW). Position 23 (H23) interacts with heme.

This sequence belongs to the PsbE/PsbF family. Heterodimer of an alpha subunit and a beta subunit. PSII is composed of 1 copy each of membrane proteins PsbA, PsbB, PsbC, PsbD, PsbE, PsbF, PsbH, PsbI, PsbJ, PsbK, PsbL, PsbM, PsbT, PsbX, PsbY, PsbZ, Psb30/Ycf12, at least 3 peripheral proteins of the oxygen-evolving complex and a large number of cofactors. It forms dimeric complexes. It depends on heme b as a cofactor.

The protein resides in the plastid. Its subcellular location is the chloroplast thylakoid membrane. Functionally, this b-type cytochrome is tightly associated with the reaction center of photosystem II (PSII). PSII is a light-driven water:plastoquinone oxidoreductase that uses light energy to abstract electrons from H(2)O, generating O(2) and a proton gradient subsequently used for ATP formation. It consists of a core antenna complex that captures photons, and an electron transfer chain that converts photonic excitation into a charge separation. This chain is Cytochrome b559 subunit alpha, found in Anthoceros angustus (Hornwort).